The chain runs to 168 residues: MTCFKLCCRRDLFAFPYPVAIWKEPPRSIEVVRDLVESYGIEQIYTVGDIVTTNFLKYSLAPTSAAVDGKTRRGLKIDKPTFFRKTIEVYNPPGYITEEAWIAVEEAVRDNVMIKVNGEEDMLSLAFIKLAPPHSVVVYGHYMGALIAIPVDWYRDAICKLFEYLEKC.

Residues aspartate 49, isoleucine 50, valine 51, aspartate 68, lysine 70, and glutamate 120 each coordinate GTP.

Belongs to the GTP-dependent DPCK family.

The catalysed reaction is 3'-dephospho-CoA + GTP = GDP + CoA + H(+). It functions in the pathway cofactor biosynthesis; coenzyme A biosynthesis. In terms of biological role, catalyzes the GTP-dependent phosphorylation of the 3'-hydroxyl group of dephosphocoenzyme A to form coenzyme A (CoA). This is GTP-dependent dephospho-CoA kinase from Pyrobaculum islandicum (strain DSM 4184 / JCM 9189 / GEO3).